The following is a 207-amino-acid chain: Superoxide dismutase [Fe] (207 aa).

Fe cation is bound by residues His28, His76, Asp160, and His164.

Belongs to the iron/manganese superoxide dismutase family. As to quaternary structure, homotetramer. Fe cation serves as cofactor.

It localises to the secreted. It carries out the reaction 2 superoxide + 2 H(+) = H2O2 + O2. Destroys superoxide anion radicals which are normally produced within the cells and which are toxic to biological systems. The polypeptide is Superoxide dismutase [Fe] (sodB) (Mycobacterium tuberculosis (strain CDC 1551 / Oshkosh)).